Here is a 337-residue protein sequence, read N- to C-terminus: Nicotinate-nucleotide--dimethylbenzimidazole phosphoribosyltransferase (337 aa).

Glu305 (proton acceptor) is an active-site residue.

The protein belongs to the CobT family.

The catalysed reaction is 5,6-dimethylbenzimidazole + nicotinate beta-D-ribonucleotide = alpha-ribazole 5'-phosphate + nicotinate + H(+). It participates in nucleoside biosynthesis; alpha-ribazole biosynthesis; alpha-ribazole from 5,6-dimethylbenzimidazole: step 1/2. In terms of biological role, catalyzes the synthesis of alpha-ribazole-5'-phosphate from nicotinate mononucleotide (NAMN) and 5,6-dimethylbenzimidazole (DMB). The sequence is that of Nicotinate-nucleotide--dimethylbenzimidazole phosphoribosyltransferase from Jannaschia sp. (strain CCS1).